Consider the following 129-residue polypeptide: Small ribosomal subunit protein uS11c (129 aa).

It belongs to the universal ribosomal protein uS11 family. As to quaternary structure, part of the 30S ribosomal subunit.

Its subcellular location is the plastid. It is found in the chloroplast. The protein is Small ribosomal subunit protein uS11c of Gracilaria tenuistipitata var. liui (Red alga).